A 1410-amino-acid chain; its full sequence is ABC transporter C family member 13 (1410 aa).

A run of 8 helical transmembrane segments spans residues 23–43, 60–80, 88–108, 122–142, 148–168, 391–411, 474–494, and 505–525; these read IVLG…LTIT, LLYV…VLLV, VILC…ILSL, ILCF…NMIF, QEIC…VLRI, LSGL…SVLI, VFFW…LFAL, and FTCL…PWVI. The ABC transmembrane type-1 1 domain occupies 255–530; it reads CNNYSTPSLI…FPWVINGLID (276 aa). Residues 564–791 form the ABC transporter 1 domain; that stretch reads VCVEDASCTW…ISPTFSLTNE (228 aa). 602-609 is a binding site for ATP; the sequence is GEVGSGKT. Helical transmembrane passes span 844 to 864, 889 to 909, 963 to 985, 990 to 1009, 1087 to 1107, and 1111 to 1131; these read AVFS…LMQG, TSFY…LTLV, SLPF…IVVL, VLFL…LQVF, IVLF…PISF, and GLVG…GSLL. The ABC transmembrane type-1 2 domain occupies 852–1139; that stretch reads TIVILVSAVL…LLTSFTETEK (288 aa). The region spanning 1174–1407 is the ABC transporter 2 domain; that stretch reads VEFHNVTMRY…DSSTFSSFVR (234 aa). Residue 1208–1215 participates in ATP binding; it reads GRTGAGKS.

The protein belongs to the ABC transporter superfamily. ABCC family. Conjugate transporter (TC 3.A.1.208) subfamily. As to expression, ubiquitous.

The protein resides in the membrane. The catalysed reaction is ATP + H2O + xenobioticSide 1 = ADP + phosphate + xenobioticSide 2.. Functionally, pump for glutathione S-conjugates. This chain is ABC transporter C family member 13 (ABCC13), found in Arabidopsis thaliana (Mouse-ear cress).